We begin with the raw amino-acid sequence, 512 residues long: ATP synthase subunit alpha (512 aa).

169–176 (GDRQTGKT) contacts ATP.

Belongs to the ATPase alpha/beta chains family. In terms of assembly, F-type ATPases have 2 components, CF(1) - the catalytic core - and CF(0) - the membrane proton channel. CF(1) has five subunits: alpha(3), beta(3), gamma(1), delta(1), epsilon(1). CF(0) has three main subunits: a(1), b(2) and c(9-12). The alpha and beta chains form an alternating ring which encloses part of the gamma chain. CF(1) is attached to CF(0) by a central stalk formed by the gamma and epsilon chains, while a peripheral stalk is formed by the delta and b chains.

Its subcellular location is the cell inner membrane. It catalyses the reaction ATP + H2O + 4 H(+)(in) = ADP + phosphate + 5 H(+)(out). Its function is as follows. Produces ATP from ADP in the presence of a proton gradient across the membrane. The alpha chain is a regulatory subunit. The sequence is that of ATP synthase subunit alpha from Leptothrix cholodnii (strain ATCC 51168 / LMG 8142 / SP-6) (Leptothrix discophora (strain SP-6)).